Here is a 99-residue protein sequence, read N- to C-terminus: RNA-binding protein Hfq (99 aa).

Positions 9–68 constitute a Sm domain; it reads DPFLNALRRERVPVSIYLVNGIKLQGQIESFDQFVILLKNTVSQMVYKHAISTVVPSRPV. The segment at 64–99 is disordered; sequence PSRPVSHHSNNPGGGSNYHGNNTAASQQSQEADDAE.

Belongs to the Hfq family. Homohexamer.

Its function is as follows. RNA chaperone that binds small regulatory RNA (sRNAs) and mRNAs to facilitate mRNA translational regulation in response to envelope stress, environmental stress and changes in metabolite concentrations. Also binds with high specificity to tRNAs. The sequence is that of RNA-binding protein Hfq from Pectobacterium carotovorum subsp. carotovorum (strain PC1).